Reading from the N-terminus, the 338-residue chain is tRNA methyltransferase 10 homolog A (338 aa).

2 disordered regions span residues 1-91 and 296-338; these read MSSE…DRKR and RVEG…SVPH. S22 carries the phosphoserine modification. The stretch at 52–80 forms a coiled coil; that stretch reads KQWEEQRELRKQKRKEKRKRKQLERQCQP. Residues 61-73 show a composition bias toward basic residues; that stretch reads RKQKRKEKRKRKQ. The 192-residue stretch at 88 to 279 folds into the SAM-dependent MTase TRM10-type domain; the sequence is DRKRIRRDVV…TILPQRKGAV (192 aa). Over residues 308–328 the composition is skewed to basic and acidic residues; it reads EENRHELDSTHEEEKQDKENS. A compositionally biased stretch (polar residues) spans 329–338; it reads TESTVNSVPH. A Phosphoserine modification is found at S335.

The protein belongs to the class IV-like SAM-binding methyltransferase superfamily. TRM10 family. As to quaternary structure, interacts with tRNA.

It is found in the nucleus. Its subcellular location is the nucleolus. The enzyme catalyses guanosine(9) in tRNA + S-adenosyl-L-methionine = N(1)-methylguanosine(9) in tRNA + S-adenosyl-L-homocysteine + H(+). In terms of biological role, S-adenosyl-L-methionine-dependent guanine N(1)-methyltransferase that catalyzes the formation of N(1)-methylguanine at position 9 (m1G9) in tRNAs. Probably not able to catalyze formation of N(1)-methyladenine at position 9 (m1A9) in tRNAs. The polypeptide is tRNA methyltransferase 10 homolog A (TRMT10A) (Bos taurus (Bovine)).